We begin with the raw amino-acid sequence, 880 residues long: Translation initiation factor IF-2 (880 aa).

Disordered regions lie at residues 51–78 (KQHG…GSTG), 93–116 (YVKR…QAAN), and 142–293 (KEAD…FEKP). Over residues 69 to 78 (STLNVKGSTG) the composition is skewed to polar residues. Residues 142–229 (KEADEKAKKA…ARKKAAEGGD (88 aa)) are compositionally biased toward basic and acidic residues. The segment covering 269–279 (GRRTRRGKKQR) has biased composition (basic residues). Residues 380 to 549 (SRAPVVTIMG…LLQAEMLDLS (170 aa)) enclose the tr-type G domain. The G1 stretch occupies residues 389–396 (GHVDHGKT). 389–396 (GHVDHGKT) serves as a coordination point for GTP. The tract at residues 414–418 (GITQH) is G2. Residues 435-438 (DTPG) are G3. Residues 435–439 (DTPGH) and 489–492 (NKID) contribute to the GTP site. The tract at residues 489 to 492 (NKID) is G4. The interval 525–527 (SAK) is G5.

The protein belongs to the TRAFAC class translation factor GTPase superfamily. Classic translation factor GTPase family. IF-2 subfamily.

Its subcellular location is the cytoplasm. Functionally, one of the essential components for the initiation of protein synthesis. Protects formylmethionyl-tRNA from spontaneous hydrolysis and promotes its binding to the 30S ribosomal subunits. Also involved in the hydrolysis of GTP during the formation of the 70S ribosomal complex. In Psychromonas ingrahamii (strain DSM 17664 / CCUG 51855 / 37), this protein is Translation initiation factor IF-2.